Here is a 51-residue protein sequence, read N- to C-terminus: Insulin (51 aa).

3 cysteine pairs are disulfide-bonded: cysteine 7–cysteine 37, cysteine 19–cysteine 50, and cysteine 36–cysteine 41.

This sequence belongs to the insulin family. As to quaternary structure, heterodimer of a B chain and an A chain linked by two disulfide bonds.

It localises to the secreted. Functionally, insulin decreases blood glucose concentration. It increases cell permeability to monosaccharides, amino acids and fatty acids. It accelerates glycolysis, the pentose phosphate cycle, and glycogen synthesis in liver. In Anguilla rostrata (American eel), this protein is Insulin (ins).